Here is a 666-residue protein sequence, read N- to C-terminus: Probable potassium transport system protein Kup (666 aa).

12 helical membrane-spanning segments follow: residues 16 to 36, 58 to 78, 100 to 120, 141 to 161, 165 to 185, 221 to 241, 253 to 273, 294 to 314, 343 to 363, 373 to 393, 399 to 419, and 424 to 444; these read GFIIALGIVYGDIGTSPLYTM, ISLIIWTLTLITTIKYVLIAL, PWLIIPAMIGGATLLSDGALT, IYQNQTNVIITTLVILIVLFG, FGTGFIGKIFGPVMFIWFSFL, IFILGSIFLATTGAEALYSDL, WPFVKMCIVLSYCGQAAWILA, VYLVSLATLAAIIASQALISG, LYIPVINWILFAVTSCTVLAF, YGLAITITMLMTTILLKYYLI, PILAHLVMAFFALVEFIFFLA, and FMHGGYAVVILALAIVFVMFI.

The protein belongs to the HAK/KUP transporter (TC 2.A.72) family.

It is found in the cell membrane. The catalysed reaction is K(+)(in) + H(+)(in) = K(+)(out) + H(+)(out). Functionally, transport of potassium into the cell. Likely operates as a K(+):H(+) symporter. This is Probable potassium transport system protein Kup from Streptococcus pyogenes serotype M49 (strain NZ131).